Consider the following 132-residue polypeptide: MKGRECARNEASRSWFGACSFASLPDQAVPACSLGSGEIPMAHGTKQKLMKASDIPAFVNEVIEAGCDICAVGHEKYVIGDTDLSRGAYGKMRQRLGRIEEAYGDRDFLKLEIVAYLRSIGRYVDVGADGSE.

This is an uncharacterized protein from Sinorhizobium fredii (strain NBRC 101917 / NGR234).